The chain runs to 1104 residues: MATPVRDETRNVIDDNISARIQSKVKTNDTVRQTPSSLRKVSIKDEQVKQYQRNLNRFKTILNGLKAEEEKLSETDDIQMLAEKLLKLGETIDKVENRIVDLVEKIQLLETNENNNILHEHIDATGTYYLFDTLTSTNKRFYPKDCVFDYRTNNVENIPILLNNFKKFIKKYQFDDVFENDIIEIDPRENEILCKIIKEGLGESLDIMNTNTTDIFRIIDGLKNKYRSLHGRDVRIRAWEKVLVDTTCRNSALLMNKLQKLVLMEKWIFSKCCQDCPNLKDYLQEAIMGTLHESLRNSVKQRLYNIPHNVGINHEEFLINTVIETVIDLSPIADDQIENSCMYCKSVFHCSINCKKKPNRELRPDSTNFSKTYYLQGAQRQQQLKSSAKEQKSWNKTQKKSNKVYNSKKLVIIDTGSGVNITNDKTLLHNYEDSNRSTRFFGIGKNSSVSVKGYGYIKIKNGHNNTDNKCLLTYYVPEEESTIISCYDLAKKTKMVLSRKYTRLGNKIIKIKTKIVNGVIHVKMNELIERPSDDSKINAIKPTSSPGFKLNKRSITLEDAHKRMGHTGIQQIENSIKHNHYEESLDLIKEPNEFWCQTCKISKATKRNHYTGSMNNHSTDHEPGSSWCMDIFGPVSSSNADTKRYMLIMVDNNTRYCMTSTHFNKNAETILAQIRKNIQYVETQFDRKVREINSDRGTEFTNDQIEEYFISKGIHHILTSTQDHAANGRAERYIRTIVTDATTLLRQSNLRVKFWEYAVTSATNIRNCLEHKSTGKLPLKAISRQPVTVRLMSFLPFGEKGIIWNHNHKKLKPSGLPSIILCKDPNSYGYKFFIPSKNKIVTSDNYTIPNYTMDGRVRNTQNIYKSHQFSSHNDNEEDQIETVTNLCEALENYEDDNKPITRLEDLFTEEELSQIDSNAKYPSPSNNLEGDLDYVFSDVEESGDYDVESELSTTNTSISTDKNKILSNKDFNSELASTEISISEIDKKGLINTSHIDEDKYDEKVHRIPSIIQEKLVGSKNTIKINDENRISDRIRSKNIGSILNTGLSRCVDITDESITNKDESMHNAKPELIQEQFNKTNHETSFPKEGSIGTKCKIPKYRQ.

The stretch at 48–112 (VKQYQRNLNR…VEKIQLLETN (65 aa)) forms a coiled coil. The ty4 protease stretch occupies residues 381–501 (QQQLKSSAKE…KTKMVLSRKY (121 aa)). Aspartate 414 functions as the For protease activity; shared with dimeric partner in the catalytic mechanism. An integrase-type zinc finger-like region spans residues 539–599 (AIKPTSSPGF…EPNEFWCQTC (61 aa)). Residues 619–786 (TDHEPGSSWC…LPLKAISRQP (168 aa)) enclose the Integrase catalytic domain. Positions 630 and 695 each coordinate Mg(2+).

The protease is a homodimer, whose active site consists of two apposed aspartic acid residues. In terms of processing, proteolytically processed into capsid protein (CA), Ty4 protease (PR), integrase (IN) and reverse transcriptase/ribonuclease H (RT) proteins. Initially, virus-like particles (VLPs) are composed of the structural unprocessed proteins Gag and Gag-Pol, and also contain the host initiator methionine tRNA (tRNA(i)-Met) which serves as a primer for minus-strand DNA synthesis, and a dimer of genomic Ty RNA. Processing of the polyproteins occurs within the particle and proceeds by an ordered pathway, called maturation. First, the protease (PR) is released by autocatalytic cleavage of the Gag-Pol polyprotein, and this cleavage is a prerequisite for subsequent processing at the remaining sites to release the mature structural and catalytic proteins. Maturation takes place prior to the RT reaction and is required to produce transposition-competent VLPs.

The protein resides in the cytoplasm. It localises to the nucleus. It catalyses the reaction DNA(n) + a 2'-deoxyribonucleoside 5'-triphosphate = DNA(n+1) + diphosphate. It carries out the reaction Endonucleolytic cleavage to 5'-phosphomonoester.. In terms of biological role, capsid protein (CA) is the structural component of the virus-like particle (VLP), forming the shell that encapsulates the retrotransposons dimeric RNA genome. Functionally, the aspartyl protease (PR) mediates the proteolytic cleavages of the Gag and Gag-Pol polyproteins after assembly of the VLP. Reverse transcriptase/ribonuclease H (RT) is a multifunctional enzyme that catalyzes the conversion of the retro-elements RNA genome into dsDNA within the VLP. The enzyme displays a DNA polymerase activity that can copy either DNA or RNA templates, and a ribonuclease H (RNase H) activity that cleaves the RNA strand of RNA-DNA heteroduplexes during plus-strand synthesis and hydrolyzes RNA primers. The conversion leads to a linear dsDNA copy of the retrotransposon that includes long terminal repeats (LTRs) at both ends. Its function is as follows. Integrase (IN) targets the VLP to the nucleus, where a subparticle preintegration complex (PIC) containing at least integrase and the newly synthesized dsDNA copy of the retrotransposon must transit the nuclear membrane. Once in the nucleus, integrase performs the integration of the dsDNA into the host genome. This is Transposon Ty4-P Gag-Pol polyprotein (TY4B-P) from Saccharomyces cerevisiae (strain ATCC 204508 / S288c) (Baker's yeast).